The following is a 432-amino-acid chain: MKKVIYTIVGFVFMWSTSVYADLTIQIDQSSDNAVPIALVPFEWKGAQLHPPQNITSIVGNDLLRSGKFKAVDEAKLPSRPKTLDDIDFYQWKQLGVDNLLMGRITEEANGTYQIEMRFVDLLRKEQVIGKRWSGISKSLLRQVAHKMSDLIYEELTGIRGAFNTRMAYVTVRNVKGKKQYSLEVADSDGYNSQPILRSSLPIMSPSWSPDGQHLAYVSFENGRSQIVLQSLDGKSRQIIAKFKGINGAPAWSPDGKKLALTLSKDGSADVYIMDMKTRKLRRLTRNWAIETEAVWAPNGHSLFFNSDRRGQPQIFQVFLDTGEMRRISYVGRYNANPAISPDGRYVAMVHANGGFHIAVLDLYNEDFNILTKTYLDESPTFSPNGEMILYAMNQGGQGKLAVVSVNSNVTQILSVQEGEVRSPSWGPYLPR.

An N-terminal signal peptide occupies residues 1 to 21; sequence MKKVIYTIVGFVFMWSTSVYA.

Belongs to the TolB family. As to quaternary structure, the Tol-Pal system is composed of five core proteins: the inner membrane proteins TolA, TolQ and TolR, the periplasmic protein TolB and the outer membrane protein Pal. They form a network linking the inner and outer membranes and the peptidoglycan layer.

Its subcellular location is the periplasm. Its function is as follows. Part of the Tol-Pal system, which plays a role in outer membrane invagination during cell division and is important for maintaining outer membrane integrity. The chain is Tol-Pal system protein TolB from Hydrogenovibrio crunogenus (strain DSM 25203 / XCL-2) (Thiomicrospira crunogena).